The sequence spans 392 residues: ATP phosphoribosyltransferase regulatory subunit (392 aa).

The protein belongs to the class-II aminoacyl-tRNA synthetase family. HisZ subfamily. Heteromultimer composed of HisG and HisZ subunits.

The protein resides in the cytoplasm. It functions in the pathway amino-acid biosynthesis; L-histidine biosynthesis; L-histidine from 5-phospho-alpha-D-ribose 1-diphosphate: step 1/9. Functionally, required for the first step of histidine biosynthesis. May allow the feedback regulation of ATP phosphoribosyltransferase activity by histidine. This Prochlorococcus marinus (strain MIT 9313) protein is ATP phosphoribosyltransferase regulatory subunit.